A 138-amino-acid polypeptide reads, in one-letter code: Ribosome-binding factor A (138 aa).

Positions 119–138 (RSPEVQRDLGPSNEKDDEQN) are disordered.

Belongs to the RbfA family. Monomer. Binds 30S ribosomal subunits, but not 50S ribosomal subunits or 70S ribosomes.

Its subcellular location is the cytoplasm. One of several proteins that assist in the late maturation steps of the functional core of the 30S ribosomal subunit. Associates with free 30S ribosomal subunits (but not with 30S subunits that are part of 70S ribosomes or polysomes). Required for efficient processing of 16S rRNA. May interact with the 5'-terminal helix region of 16S rRNA. In Agrobacterium fabrum (strain C58 / ATCC 33970) (Agrobacterium tumefaciens (strain C58)), this protein is Ribosome-binding factor A.